A 559-amino-acid chain; its full sequence is Formate--tetrahydrofolate ligase (559 aa).

68-75 (TPAGEGKT) provides a ligand contact to ATP.

The protein belongs to the formate--tetrahydrofolate ligase family.

The catalysed reaction is (6S)-5,6,7,8-tetrahydrofolate + formate + ATP = (6R)-10-formyltetrahydrofolate + ADP + phosphate. The protein operates within one-carbon metabolism; tetrahydrofolate interconversion. This chain is Formate--tetrahydrofolate ligase, found in Rhizobium meliloti (strain 1021) (Ensifer meliloti).